An 80-amino-acid chain; its full sequence is Acyl carrier protein (80 aa).

Residues Glu-4–Gln-79 form the Carrier domain. Position 39 is an O-(pantetheine 4'-phosphoryl)serine (Ser-39).

Belongs to the acyl carrier protein (ACP) family. 4'-phosphopantetheine is transferred from CoA to a specific serine of apo-ACP by AcpS. This modification is essential for activity because fatty acids are bound in thioester linkage to the sulfhydryl of the prosthetic group.

The protein resides in the cytoplasm. It participates in lipid metabolism; fatty acid biosynthesis. Its function is as follows. Carrier of the growing fatty acid chain in fatty acid biosynthesis. This Prochlorococcus marinus (strain SARG / CCMP1375 / SS120) protein is Acyl carrier protein.